The primary structure comprises 317 residues: Beta-ketoacyl-[acyl-carrier-protein] synthase III (317 aa).

Catalysis depends on residues C112 and H244. An ACP-binding region spans residues 245 to 249 (QANLR). N274 is a catalytic residue.

This sequence belongs to the thiolase-like superfamily. FabH family. Homodimer.

The protein localises to the cytoplasm. The enzyme catalyses malonyl-[ACP] + acetyl-CoA + H(+) = 3-oxobutanoyl-[ACP] + CO2 + CoA. It functions in the pathway lipid metabolism; fatty acid biosynthesis. Functionally, catalyzes the condensation reaction of fatty acid synthesis by the addition to an acyl acceptor of two carbons from malonyl-ACP. Catalyzes the first condensation reaction which initiates fatty acid synthesis and may therefore play a role in governing the total rate of fatty acid production. Possesses both acetoacetyl-ACP synthase and acetyl transacylase activities. Its substrate specificity determines the biosynthesis of branched-chain and/or straight-chain of fatty acids. This chain is Beta-ketoacyl-[acyl-carrier-protein] synthase III, found in Enterobacter sp. (strain 638).